Here is a 329-residue protein sequence, read N- to C-terminus: GTPase Obg (329 aa).

Residues 1-159 (MQFIDQACIS…WLLHLELKLL (159 aa)) enclose the Obg domain. Positions 160 to 328 (AEVGIIGLPN…LLKNVWEKLE (169 aa)) constitute an OBG-type G domain. Residues 166–173 (GLPNAGKS), 191–195 (FTTLI), 213–216 (DIPG), 280–283 (NKKE), and 309–311 (SAA) each bind ATP. Residues S173 and T193 each contribute to the Mg(2+) site.

The protein belongs to the TRAFAC class OBG-HflX-like GTPase superfamily. OBG GTPase family. As to quaternary structure, monomer. The cofactor is Mg(2+).

The protein resides in the cytoplasm. In terms of biological role, an essential GTPase which binds GTP, GDP and possibly (p)ppGpp with moderate affinity, with high nucleotide exchange rates and a fairly low GTP hydrolysis rate. Plays a role in control of the cell cycle, stress response, ribosome biogenesis and in those bacteria that undergo differentiation, in morphogenesis control. The polypeptide is GTPase Obg (Prochlorococcus marinus (strain MIT 9211)).